The primary structure comprises 96 residues: Co-chaperonin GroES (96 aa).

It belongs to the GroES chaperonin family. Heptamer of 7 subunits arranged in a ring. Interacts with the chaperonin GroEL.

Its subcellular location is the cytoplasm. Functionally, together with the chaperonin GroEL, plays an essential role in assisting protein folding. The GroEL-GroES system forms a nano-cage that allows encapsulation of the non-native substrate proteins and provides a physical environment optimized to promote and accelerate protein folding. GroES binds to the apical surface of the GroEL ring, thereby capping the opening of the GroEL channel. The chain is Co-chaperonin GroES from Teredinibacter turnerae (strain ATCC 39867 / T7901).